Reading from the N-terminus, the 433-residue chain is 26S proteasome regulatory subunit 7 (433 aa).

Residues 1–22 (MPDYLGADQRKTKEDEKDDKPI) form a disordered region. Over residues 8 to 22 (DQRKTKEDEKDDKPI) the composition is skewed to basic and acidic residues. N6-acetyllysine is present on Lys-116. 216–223 (GPPGTGKT) contacts ATP. Lys-422 carries the N6-acetyllysine modification.

It belongs to the AAA ATPase family. As to quaternary structure, component of the 19S proteasome regulatory particle complex. The 26S proteasome consists of a 20S core particle (CP) and two 19S regulatory subunits (RP). The regulatory particle is made of a lid composed of 9 subunits, a base containing 6 ATPases including PSMC2 and few additional components. Interacts with NDC80 and SQSTM1. Interacts with PAAF1. Interacts with TRIM5. In terms of processing, monoubiquitinated by RNF181. Post-translationally, phosphorylated. Dephosphorylated by UBLCP1 which impairs PSMC2 ATPase activity and disrupts 26S proteasome assembly.

It is found in the cytoplasm. Its function is as follows. Component of the 26S proteasome, a multiprotein complex involved in the ATP-dependent degradation of ubiquitinated proteins. This complex plays a key role in the maintenance of protein homeostasis by removing misfolded or damaged proteins, which could impair cellular functions, and by removing proteins whose functions are no longer required. Therefore, the proteasome participates in numerous cellular processes, including cell cycle progression, apoptosis, or DNA damage repair. PSMC2 belongs to the heterohexameric ring of AAA (ATPases associated with diverse cellular activities) proteins that unfolds ubiquitinated target proteins that are concurrently translocated into a proteolytic chamber and degraded into peptides. The sequence is that of 26S proteasome regulatory subunit 7 (Psmc2) from Rattus norvegicus (Rat).